Here is a 906-residue protein sequence, read N- to C-terminus: Protein translocase subunit SecA (906 aa).

Residues Q89, 107–111 (GEGKT), and D502 each bind ATP. C890, C892, C901, and H902 together coordinate Zn(2+).

The protein belongs to the SecA family. In terms of assembly, monomer and homodimer. Part of the essential Sec protein translocation apparatus which comprises SecA, SecYEG and auxiliary proteins SecDF-YajC and YidC. Zn(2+) is required as a cofactor.

The protein localises to the cell inner membrane. Its subcellular location is the cytoplasm. It carries out the reaction ATP + H2O + cellular proteinSide 1 = ADP + phosphate + cellular proteinSide 2.. Its function is as follows. Part of the Sec protein translocase complex. Interacts with the SecYEG preprotein conducting channel. Has a central role in coupling the hydrolysis of ATP to the transfer of proteins into and across the cell membrane, serving both as a receptor for the preprotein-SecB complex and as an ATP-driven molecular motor driving the stepwise translocation of polypeptide chains across the membrane. The protein is Protein translocase subunit SecA of Bartonella quintana (strain Toulouse) (Rochalimaea quintana).